The sequence spans 294 residues: N-acetylmuramic acid 6-phosphate etherase (294 aa).

Residues Val-54–Lys-217 form the SIS domain. The active-site Proton donor is Glu-82. The active site involves Glu-113.

This sequence belongs to the GCKR-like family. MurNAc-6-P etherase subfamily. Homodimer.

It catalyses the reaction N-acetyl-D-muramate 6-phosphate + H2O = N-acetyl-D-glucosamine 6-phosphate + (R)-lactate. It functions in the pathway amino-sugar metabolism; N-acetylmuramate degradation. In terms of biological role, specifically catalyzes the cleavage of the D-lactyl ether substituent of MurNAc 6-phosphate, producing GlcNAc 6-phosphate and D-lactate. The chain is N-acetylmuramic acid 6-phosphate etherase from Bacillus cereus (strain AH820).